The primary structure comprises 342 residues: MTTLTITRPDDWHVHLRDGEVLADTVRDISRYNGRALIMPNTVPPVTTTEMALAYRDRIQAHNQTEQFSPLMSLYLTDNTTADEVRKAKASGAVVAAKLYPAGATTNSDSGVTDVKKIYPVLQAMQEVGMLLLVHGEVTTHDVDIFDREKTFLDNVLAPIVQDFPDLKIVLEHITTSDAVVFVKNANENVAATITAHHLLYNRNHMLVGGIKPHFYCLPILKRNTHQLALISAATSGNKKFFLGTDSAPHAKGAKESACGCAGSYTAHAALELYAEVFEQAGKLENLEAFASHNGPDFYGLPRNQDTITLVKDAWPVPASMPFGGDIVVPIRAGENMEWKVK.

Residues histidine 13 and histidine 15 each coordinate Zn(2+). Substrate contacts are provided by residues 15-17 (HLR) and asparagine 41. Zn(2+) is bound by residues lysine 98, histidine 135, and histidine 173. Lysine 98 is modified (N6-carboxylysine). Histidine 135 serves as a coordination point for substrate. Leucine 218 is a substrate binding site. Residue aspartate 246 participates in Zn(2+) binding. Residue aspartate 246 is part of the active site. Substrate-binding residues include histidine 250 and alanine 262.

Belongs to the metallo-dependent hydrolases superfamily. DHOase family. Class II DHOase subfamily. In terms of assembly, homodimer. It depends on Zn(2+) as a cofactor.

It catalyses the reaction (S)-dihydroorotate + H2O = N-carbamoyl-L-aspartate + H(+). It participates in pyrimidine metabolism; UMP biosynthesis via de novo pathway; (S)-dihydroorotate from bicarbonate: step 3/3. In terms of biological role, catalyzes the reversible cyclization of carbamoyl aspartate to dihydroorotate. The polypeptide is Dihydroorotase (Vibrio vulnificus (strain YJ016)).